We begin with the raw amino-acid sequence, 471 residues long: Methionine aminopeptidase 2 (471 aa).

Disordered regions lie at residues valine 16–phenylalanine 80 and cysteine 92–arginine 139. Residues glutamate 32–valine 47 are compositionally biased toward acidic residues. The span at lysine 52 to glycine 65 shows a compositional bias: basic residues. The segment covering alanine 119 to arginine 139 has biased composition (basic and acidic residues). Histidine 224 contacts substrate. A divalent metal cation is bound by residues aspartate 244, aspartate 255, and histidine 324. Histidine 332 is a binding site for substrate. A divalent metal cation contacts are provided by glutamate 357 and glutamate 452.

It belongs to the peptidase M24A family. Methionine aminopeptidase eukaryotic type 2 subfamily. Co(2+) serves as cofactor. Requires Zn(2+) as cofactor. The cofactor is Mn(2+). Fe(2+) is required as a cofactor.

The protein resides in the cytoplasm. The catalysed reaction is Release of N-terminal amino acids, preferentially methionine, from peptides and arylamides.. Its function is as follows. Cotranslationally removes the N-terminal methionine from nascent proteins. The N-terminal methionine is often cleaved when the second residue in the primary sequence is small and uncharged (Met-Ala-, Cys, Gly, Pro, Ser, Thr, or Val). This chain is Methionine aminopeptidase 2, found in Yarrowia lipolytica (strain CLIB 122 / E 150) (Yeast).